Consider the following 352-residue polypeptide: C-C chemokine receptor type 5 (352 aa).

Residues 1 to 30 (MDYQVSSPIYDIDYGASEPCRKTDVKQMGA) lie on the Extracellular side of the membrane. Tyrosine 3 carries the sulfotyrosine modification. Serine 6 and serine 7 each carry an O-linked (GalNAc...) serine glycan. Tyrosine 10 and tyrosine 14 each carry sulfotyrosine. Disulfide bonds link cysteine 20/cysteine 269 and cysteine 101/cysteine 178. A helical transmembrane segment spans residues 31 to 58 (HLLPPLYSMVFLFGFVGNMLVVLILVNC). Over 59 to 68 (KRPKSMTDIY) the chain is Cytoplasmic. The chain crosses the membrane as a helical span at residues 69–89 (LLNLAISDLLFLFTVPFWAHY). The Extracellular portion of the chain corresponds to 90 to 102 (AAGQWDFGNTMCQ). A helical transmembrane segment spans residues 103 to 124 (FLTGLYFIGFFSGIFFIILLTI). Topologically, residues 125–141 (DRYLAIVHAVFALKART) are cytoplasmic. Residues 142–166 (VTFGVMTSVITWVVAVFASLPGIIF) form a helical membrane-spanning segment. Topologically, residues 167–198 (TRSQKEGYHYTCSPHFPFGQYQFWKNFETLKM) are extracellular. Residues 199-218 (VILGLVLPLLVMVICYSGIL) form a helical membrane-spanning segment. Residues 219–235 (KTLLRCRNEKKRHRAVR) lie on the Cytoplasmic side of the membrane. Residues 236–260 (LIFTIMIVYFLFWAPYNIVLLLNTY) traverse the membrane as a helical segment. Over 261-277 (QEFFGLNNCSSSNRLDQ) the chain is Extracellular. The chain crosses the membrane as a helical span at residues 278–301 (AMQVTETLGMTHCCVNPIIYAFVG). Residues 302–352 (EKFRNYLLVFFQKHIAKCFCECCSIFQKEAPERANSVYTRSTGEQEISVGL) lie on the Cytoplasmic side of the membrane. Residues cysteine 321, cysteine 323, and cysteine 324 are each lipidated (S-palmitoyl cysteine). Phosphoserine; by BARK1 is present on residues serine 337, serine 342, and serine 349.

This sequence belongs to the G-protein coupled receptor 1 family. In terms of assembly, interacts with PRAF2. Efficient ligand binding to CCL3/MIP-1alpha and CCL4/MIP-1beta requires sulfation, O-glycosylation and sialic acid modifications. Glycosylation on Ser-6 is required for efficient binding of CCL4. Interacts with GRK2. Interacts with ARRB1 and ARRB2. Interacts with CNIH4. Interacts with S100A4; this interaction stimulates T-lymphocyte chemotaxis. In terms of processing, sulfated on at least 2 of the N-terminal tyrosines. Sulfation is required for efficient binding of the chemokines, CCL3 and CCL4. Palmitoylation in the C-terminal is important for cell surface expression. Post-translationally, phosphorylation on serine residues in the C-terminal is stimulated by binding CC chemokines especially by APO-RANTES. In terms of processing, O-glycosylated, but not N-glycosylated. Ser-6 appears to be the major site even if Ser-7 may be also O-glycosylated. Also sialylated glycans present which contribute to chemokine binding. Ser-17 may also be glycosylated and, if so, with small moieties such as a T-antigen.

It localises to the cell membrane. In terms of biological role, receptor for a number of inflammatory CC-chemokines including CCL3/MIP-1-alpha, CCL4/MIP-1-beta and RANTES and subsequently transduces a signal by increasing the intracellular calcium ion level. May play a role in the control of granulocytic lineage proliferation or differentiation. Participates in T-lymphocyte migration to the infection site by acting as a chemotactic receptor. This chain is C-C chemokine receptor type 5 (CCR5), found in Ateles geoffroyi (Black-handed spider monkey).